The sequence spans 1234 residues: PAN2-PAN3 deadenylation complex catalytic subunit PAN2 (1234 aa).

Residues 12–32 (LKNSNNNSNSNSSSNNSSNGV) are disordered. A compositionally biased stretch (low complexity) spans 14–30 (NSNNNSNSNSSSNNSSN). 3 WD repeats span residues 176–213 (NHTGKVAMVKEAPKLLALASSTGSLELFDPTSNSSIKT), 272–315 (AFPA…VYHA), and 342–381 (QQQPHLSGLEISENGDFFMFNDGFSNLHLWSITNSGTLSK). Residues 323-346 (PLPPAGSSAAQQQKQQQQQQQQPH) form a disordered region. A compositionally biased stretch (low complexity) spans 333–344 (QQQKQQQQQQQQ). The tract at residues 383–537 (FVNFPQEIER…DSIFQCQNDE (155 aa)) is linker. Residues 538–946 (KIPNCYSRLQ…KPVIVIYQEV (409 aa)) enclose the USP domain. A disordered region spans residues 751 to 775 (PNTQQDQQQQQQQQQQQQQQQQPTN). Positions 754–772 (QQDQQQQQQQQQQQQQQQQ) are enriched in low complexity. A divalent metal cation-binding residues include Asp1004, Glu1006, Asp1138, and Asp1191. An Exonuclease domain is found at 1072–1199 (GEAFIDDYIV…EDARTALLLY (128 aa)).

It belongs to the peptidase C19 family. PAN2 subfamily. As to quaternary structure, forms a heterotrimer with an asymmetric homodimer of the regulatory subunit PAN3 to form the poly(A)-nuclease (PAN) deadenylation complex. A divalent metal cation is required as a cofactor.

It localises to the cytoplasm. It catalyses the reaction Exonucleolytic cleavage of poly(A) to 5'-AMP.. Positively regulated by the regulatory subunit PAN3. Functionally, catalytic subunit of the poly(A)-nuclease (PAN) deadenylation complex, one of two cytoplasmic mRNA deadenylases involved in mRNA turnover. PAN specifically shortens poly(A) tails of RNA and the activity is stimulated by poly(A)-binding protein PAB1. PAN deadenylation is followed by rapid degradation of the shortened mRNA tails by the CCR4-NOT complex. Deadenylated mRNAs are then degraded by two alternative mechanisms, namely exosome-mediated 3'-5' exonucleolytic degradation, or deadenylation-dependent mRNA decaping and subsequent 5'-3' exonucleolytic degradation by XRN1. May also be involved in post-transcriptional maturation of mRNA poly(A) tails. In Lodderomyces elongisporus (strain ATCC 11503 / CBS 2605 / JCM 1781 / NBRC 1676 / NRRL YB-4239) (Yeast), this protein is PAN2-PAN3 deadenylation complex catalytic subunit PAN2.